The chain runs to 110 residues: Class I hydrophobin 2 (110 aa).

The signal sequence occupies residues 1–19 (MFARAASVFVLSLPILATA). 4 cysteine pairs are disulfide-bonded: cysteine 29–cysteine 89, cysteine 36–cysteine 83, cysteine 37–cysteine 70, and cysteine 90–cysteine 103.

It belongs to the fungal hydrophobin family. In terms of assembly, self-assembles to form functional amyloid fibrils called rodlets. Self-assembly into fibrillar rodlets occurs spontaneously at hydrophobic:hydrophilic interfaces and the rodlets further associate laterally to form amphipathic monolayers.

The protein resides in the secreted. It localises to the cell wall. Aerial growth, conidiation, and dispersal of filamentous fungi in the environment rely upon a capability of their secreting small amphipathic proteins called hydrophobins (HPBs) with low sequence identity. Class I can self-assemble into an outermost layer of rodlet bundles on aerial cell surfaces, conferring cellular hydrophobicity that supports fungal growth, development and dispersal; whereas Class II form highly ordered films at water-air interfaces through intermolecular interactions but contribute nothing to the rodlet structure. Pnh2 is a class I hydrophobin that might be involved in the attachment of the hydrophilic wall of hyphae to the hydrophobic surface of wood under inorganic phosphate (Pi)-deficient conditions and enable the mycelium to degrade efficiently the components of wood and to acquire nutrients containing Pi. The polypeptide is Class I hydrophobin 2 (Pholiota nameko).